Consider the following 879-residue polypeptide: Alanine--tRNA ligase (879 aa).

Positions 426-449 (KQKERARNARGNMDGESWKEDPLS) are disordered. Zn(2+) contacts are provided by His-566, His-570, Cys-668, and His-672.

It belongs to the class-II aminoacyl-tRNA synthetase family. It depends on Zn(2+) as a cofactor.

It is found in the cytoplasm. The enzyme catalyses tRNA(Ala) + L-alanine + ATP = L-alanyl-tRNA(Ala) + AMP + diphosphate. In terms of biological role, catalyzes the attachment of alanine to tRNA(Ala) in a two-step reaction: alanine is first activated by ATP to form Ala-AMP and then transferred to the acceptor end of tRNA(Ala). Also edits incorrectly charged Ser-tRNA(Ala) and Gly-tRNA(Ala) via its editing domain. This chain is Alanine--tRNA ligase, found in Clostridioides difficile (strain 630) (Peptoclostridium difficile).